The chain runs to 388 residues: bZIP transcription factor 1-D (388 aa).

Disordered stretches follow at residues Met1 to Pro49, Phe103 to Thr249, Thr261 to Ala316, and Glu348 to Asn388. Composition is skewed to low complexity over residues Pro23–Thr33 and Ala117–Gly129. The segment covering Ser169–Gln179 has biased composition (polar residues). The segment covering Ser180–Glu193 has biased composition (low complexity). The segment covering Arg214–Gln231 has biased composition (polar residues). In terms of domain architecture, bZIP spans Glu293 to Leu356. Residues Lys295–Lys314 form a basic motif region. Residues Ser302 to Ala316 are compositionally biased toward basic and acidic residues. The tract at residues Leu321–Leu356 is leucine-zipper. 2 stretches are compositionally biased toward basic and acidic residues: residues Asn359–Glu369 and Lys375–Asn388.

This sequence belongs to the bZIP family. As to expression, highly expressed in roots and at lower levels in stems and leaves.

The protein localises to the nucleus. Functionally, probable transcription factor that may be involved in responses to fungal pathogen infection and abiotic stresses. This chain is bZIP transcription factor 1-D, found in Triticum aestivum (Wheat).